The primary structure comprises 101 residues: Putative pterin-4-alpha-carbinolamine dehydratase (101 aa).

It belongs to the pterin-4-alpha-carbinolamine dehydratase family.

It catalyses the reaction (4aS,6R)-4a-hydroxy-L-erythro-5,6,7,8-tetrahydrobiopterin = (6R)-L-erythro-6,7-dihydrobiopterin + H2O. This is Putative pterin-4-alpha-carbinolamine dehydratase from Rhizobium etli (strain ATCC 51251 / DSM 11541 / JCM 21823 / NBRC 15573 / CFN 42).